A 508-amino-acid chain; its full sequence is Pentatricopeptide repeat-containing protein At3g04130, mitochondrial (508 aa).

A mitochondrion-targeting transit peptide spans 1–74 (MSWLIQNRIG…DSEDDVFKRL (74 aa)). PPR repeat units follow at residues 120–150 (SSDA…MRGD), 154–188 (TLNT…GLEK), 189–219 (NTES…LKSH), 223–257 (NAHT…GFRP), 258–292 (CVIS…GSPP), 293–327 (NSIT…GCKP), 328–363 (DSLF…GVSI), 364–398 (NTST…NLCN), 400–434 (DVHT…HHLS), and 436–470 (DEST…DITP).

The protein belongs to the PPR family. P subfamily.

The protein resides in the mitochondrion. The chain is Pentatricopeptide repeat-containing protein At3g04130, mitochondrial from Arabidopsis thaliana (Mouse-ear cress).